Here is a 481-residue protein sequence, read N- to C-terminus: Beta-amyrin 28-monooxygenase (481 aa).

Residues 4-24 form a helical membrane-spanning segment; it reads FYVPLLSLFVLFISLSFHFLF. Cys-428 lines the heme pocket.

It belongs to the cytochrome P450 family. Heme serves as cofactor. Mostly expressed in roots, and, to a lower extent, in stems and leaves. Accumulates only in the rhizome of plants.

It localises to the membrane. The enzyme catalyses beta-amyrin + 3 reduced [NADPH--hemoprotein reductase] + 3 O2 = oleanolate + 3 oxidized [NADPH--hemoprotein reductase] + 4 H2O + 4 H(+). It functions in the pathway secondary metabolite biosynthesis; terpenoid biosynthesis. In terms of biological role, component of the oleanane-type triterpene saponins (e.g. ginsenosides or panaxosides) biosynthetic pathway. Catalyzes the carboxylation of beta-amyrin at the C-28 position to form oleanolic acid during ginsenoside biosynthesis, a class of tetracyclic triterpenoid saponins. This Panax ginseng (Korean ginseng) protein is Beta-amyrin 28-monooxygenase.